The chain runs to 668 residues: Transketolase 2 (668 aa).

His-26 serves as a coordination point for substrate. Thiamine diphosphate contacts are provided by residues His-66 and 114 to 116 (GPL). Residue Asp-155 participates in Mg(2+) binding. Thiamine diphosphate contacts are provided by Gly-156 and Asn-185. Residues Asn-185 and Ile-187 each coordinate Mg(2+). His-261, Arg-358, and Ser-385 together coordinate substrate. Position 261 (His-261) interacts with thiamine diphosphate. The active-site Proton donor is Glu-413. Phe-439 lines the thiamine diphosphate pocket. The substrate site is built by His-463, Asp-471, and Arg-522.

Belongs to the transketolase family. Homodimer. Requires Mg(2+) as cofactor. Ca(2+) serves as cofactor. The cofactor is Mn(2+). It depends on Co(2+) as a cofactor. Thiamine diphosphate is required as a cofactor.

The catalysed reaction is D-sedoheptulose 7-phosphate + D-glyceraldehyde 3-phosphate = aldehydo-D-ribose 5-phosphate + D-xylulose 5-phosphate. Its function is as follows. Catalyzes the transfer of a two-carbon ketol group from a ketose donor to an aldose acceptor, via a covalent intermediate with the cofactor thiamine pyrophosphate. In Pasteurella multocida (strain Pm70), this protein is Transketolase 2 (tktB).